Consider the following 294-residue polypeptide: Protein RarD (294 aa).

At 1-11 (MDAKQTRQGVL) the chain is on the cytoplasmic side. A helical membrane pass occupies residues 12-34 (LALAAYFIWGIAPAYFKLIYYVP). Residues 18–145 (FIWGIAPAYF…AVCGVLVQLW (128 aa)) form the EamA domain. Topologically, residues 35-37 (ADE) are periplasmic. Residues 38–60 (ILTHRVIWSFFFMVALLSVSRQW) traverse the membrane as a helical segment. At 61–72 (RQVKRLLKTPKK) the chain is on the cytoplasmic side. A helical transmembrane segment spans residues 73 to 95 (IFLLALSAVLVGGNWLLFIWAVN). Over 96 to 99 (NHHM) the chain is Periplasmic. A helical transmembrane segment spans residues 100-122 (LEASLGYFINPLVNILLGMIFLG). Residues 123–128 (ERFRRM) lie on the Cytoplasmic side of the membrane. A helical membrane pass occupies residues 129–146 (QWLAVILAVCGVLVQLWT). Residues 147-149 (FGS) are Periplasmic-facing. The helical transmembrane segment at 150 to 167 (LPIIALGLAFSFAFYGLV) threads the bilayer. At 168–179 (RKKIAVEAQTGM) the chain is on the cytoplasmic side. Residues 180-197 (LVETLWLLPVAAIYLFSI) form a helical membrane-spanning segment. Topologically, residues 198 to 211 (ADSATSHMGQNALS) are periplasmic. The helical transmembrane segment at 212 to 234 (LNLLLMAAGVVTTIPLLCFTGAA) threads the bilayer. At 235 to 238 (TRLR) the chain is on the cytoplasmic side. The helical transmembrane segment at 239 to 261 (LSTLGFFQYIGPTLMFLLAVTFY) threads the bilayer. The Periplasmic segment spans residues 262–270 (GEVPGADKM). The chain crosses the membrane as a helical span at residues 271–290 (VTFAFIWVALAIFVMDAIYT). The Cytoplasmic segment spans residues 291–294 (QRKK).

Belongs to the EamA transporter family.

It localises to the cell inner membrane. The polypeptide is Protein RarD (rarD) (Salmonella typhi).